Consider the following 973-residue polypeptide: ATP-dependent DNA helicase Q5 (973 aa).

A Helicase ATP-binding domain is found at Met39 to Val213. Residue Met52–Ser59 participates in ATP binding. The DEAH box signature appears at Asp157–His160. The region spanning Asn241–Leu398 is the Helicase C-terminal domain. Zn(2+) is bound by residues Cys412, Cys428, Cys432, and Cys435. 2 positions are modified to phosphoserine: Ser489 and Ser492. The tract at residues Gly491–Met621 is interaction with POLR2A. Disordered stretches follow at residues Gly518–Ala538, Thr679–Lys795, and Cys822–Pro884. Phosphothreonine is present on Thr527. Positions Pro653–Asp726 are interaction with RAD51. At Ser728 the chain carries Phosphoserine; by CDK1. Over residues Thr840–Arg856 the composition is skewed to basic and acidic residues. A compositionally biased stretch (polar residues) spans Pro863–Asn878.

The protein belongs to the helicase family. RecQ subfamily. As to quaternary structure, monomer. Interacts with TOP2A, TOP3A and TOP3B. Interacts with RNA polymerase II subunit POLR2A. Identified in a complex with the RNA polymerase II core bound to DNA. Interacts with RAD51. Interacts with WRN; this interaction stimulates WRN helicase activity on DNA fork duplexes. Interacts with MUS1; this interaction promotes MUS81-dependent mitotic DNA synthesis. Zn(2+) serves as cofactor. In terms of processing, phosphorylated by CDK1 at Ser-728; this phosphorylation is required for RECQL5-mediated disruption of RAD51 filaments on stalled replication forks.

Its subcellular location is the nucleus. The protein resides in the nucleoplasm. It catalyses the reaction Couples ATP hydrolysis with the unwinding of duplex DNA by translocating in the 3'-5' direction.. The catalysed reaction is ATP + H2O = ADP + phosphate + H(+). Functionally, DNA helicase that plays an important role in DNA replication, transcription and repair. Binds to the RNA polymerase II subunit POLR2A during transcription elongation and suppresses transcription-associated genomic instability. Also associates with POLR1A and enforces the stability of ribosomal DNA arrays. Plays an important role in mitotic chromosome separation after cross-over events and cell cycle progress. Mechanistically, removes RAD51 filaments protecting stalled replication forks at common fragile sites and stimulates MUS81-EME1 endonuclease leading to mitotic DNA synthesis. Required for efficient DNA repair, including repair of inter-strand cross-links. Stimulates DNA decatenation mediated by TOP2A. Prevents sister chromatid exchange and homologous recombination. This is ATP-dependent DNA helicase Q5 (Recql5) from Rattus norvegicus (Rat).